Here is a 359-residue protein sequence, read N- to C-terminus: MTLGPLMLDVAGTELCDDDRRRLSDPLVGGVILFSRNYRDPAQLAALCEEIHALKAAPLLIGVDHEGGRVQRFRDGFTRLPPMRSLGAIWNEHPQRARELARETGYVLASELRAHGVDFSFAPVLDLDYGASSVIGDRAFHADPQAVFQLGQAVMLGMKDAGMAACGKHFPGHGFVIADSHVDIPVDRRTLGDIARADLVPFRLMVEAGLAAMMPAHVIYPEVDAQPAGFSRVWLQKILRQQLGFDGAVFSDDLCMAGAAFAGGIVERVRAALDAGCDMALVCNHPELADEVLAKLDVDWPAPARARLARMHGHPAHAPTMTALRESARYAEALHHVAGLGRDSAELDLSDPTDYCGRA.

Substrate-binding positions include aspartate 64, arginine 72, arginine 138, and 168–169 (KH). The active-site Proton donor/acceptor is the histidine 181. Aspartate 252 functions as the Nucleophile in the catalytic mechanism.

It belongs to the glycosyl hydrolase 3 family. NagZ subfamily.

It is found in the cytoplasm. It catalyses the reaction Hydrolysis of terminal non-reducing N-acetyl-D-hexosamine residues in N-acetyl-beta-D-hexosaminides.. It functions in the pathway cell wall biogenesis; peptidoglycan recycling. Functionally, plays a role in peptidoglycan recycling by cleaving the terminal beta-1,4-linked N-acetylglucosamine (GlcNAc) from peptide-linked peptidoglycan fragments, giving rise to free GlcNAc, anhydro-N-acetylmuramic acid and anhydro-N-acetylmuramic acid-linked peptides. This chain is Beta-hexosaminidase, found in Thiobacillus denitrificans (strain ATCC 25259 / T1).